A 160-amino-acid polypeptide reads, in one-letter code: Transcriptional repressor NrdR (160 aa).

A zinc finger spans residues cysteine 3–cysteine 34. Positions leucine 49 to aspartate 139 constitute an ATP-cone domain.

Belongs to the NrdR family. Zn(2+) serves as cofactor.

In terms of biological role, negatively regulates transcription of bacterial ribonucleotide reductase nrd genes and operons by binding to NrdR-boxes. This is Transcriptional repressor NrdR from Bartonella quintana (strain Toulouse) (Rochalimaea quintana).